A 598-amino-acid chain; its full sequence is MNELIKHKLELLPDSPGCYLHKDKEGTIIYVGKAKNLKKRVRSYFRGSHDTKTELLVSEIVDFEYIVTESDTEALLLEINLIQKNMPKYNIKLKDDKSYPFLKITNESFPRLVITRYIKKNDGLYFGPYPDSYTANEVKKLLDRIFPFKKCKNPINKVCFYYHLGQCCAHTICHTDKAYWDRLIDDVKHFLNGKDDKIIEDLRSKMLAASEEMAFERAAEYRDLISGIATMRTKQRVMSKDLQDRDIFGYYVDKGWMCVQVFFVRQGKLIQRDVNLFPYYNDAEEDFLTYMGQFYQDKQHFIPKEVFIPEAIDEELVAAIVPTKIIKPKRGEKKQLVALATKNARVSLQQKFDLLEKDIKKTSGAIDNLGHLLGINKPVRIEAFDNSNIQGTSPVAAMVVFVDGKPSKKDYRKFKIKTVVGPDDYASMREVLFRRYSRVKKEGLQAPNLIIVDGGVGQVNVAKDVIEKQLGLTIPVAGLQKNDKHQTHDLLFGNPLEVVPLPRRSEEFFLLHRIQDEVHRFAVTFHRQVRRKNSFSSTLDHISGLGPKRKQLLLRHFKTITAIASATSEEIQALGIPKTVVEAIQQQITDNKNDRSSP.

The 78-residue stretch at 14–91 folds into the GIY-YIG domain; the sequence is DSPGCYLHKD…IQKNMPKYNI (78 aa). The UVR domain occupies 196 to 231; the sequence is DKIIEDLRSKMLAASEEMAFERAAEYRDLISGIATM.

The protein belongs to the UvrC family. In terms of assembly, interacts with UvrB in an incision complex.

Its subcellular location is the cytoplasm. In terms of biological role, the UvrABC repair system catalyzes the recognition and processing of DNA lesions. UvrC both incises the 5' and 3' sides of the lesion. The N-terminal half is responsible for the 3' incision and the C-terminal half is responsible for the 5' incision. This Streptococcus pyogenes serotype M5 (strain Manfredo) protein is UvrABC system protein C.